We begin with the raw amino-acid sequence, 488 residues long: Surface lipoprotein assembly modifier 1 (488 aa).

Positions 1–31 are cleaved as a signal peptide; that stretch reads MVIFYFCGKTFMPARNRWMLLLPLLASAAYA. Positions 32 to 202 are N-terminal domain; it reads EETPREPDLR…LYRKALRERD (171 aa). 2 TPR repeats span residues 118 to 151 and 171 to 204; these read MLALYAQGILAQADGRVKEAISHYRELIAAQPDA and AADQFDRLKAENLPPQLMEQVELYRKALRERDAW. The tract at residues 203-488 is C-terminal probable beta barrel, partially restores export of lipoproteins; the sequence is AWKVNGGFSV…RAFVEFNKTF (286 aa). Transmembrane regions (beta stranded) follow at residues 204 to 214, 241 to 252, 257 to 267, 280 to 291, 294 to 304, 316 to 325, 330 to 340, 354 to 364, 368 to 377, 393 to 402, 407 to 417, 439 to 448, 455 to 464, and 478 to 488; these read WKVNGGFSVTR, VNYRLGAEKKWS, WYTTAGGDVSG, TAGVSGGIGFAD, KDAGLAVFHER, NGARLYFNRW, WQTLSSAEWGR, LQISNSLVFYR, QYWMGGLDFY, GLRFAWGQEW, LSSLLRLGAAK, LNTSLSLWHR, ITPRLTLSHR, and NRAFVEFNKTF.

Belongs to the Slam family. In terms of assembly, interacts with the C-terminal domain of surface lipoprotein TbpB.

Its subcellular location is the cell outer membrane. Its function is as follows. Required for correct export to the cell surface of some cell outer membrane lipoproteins both in Neisseria and heterologously in E.coli. In Neisseria meningitidis serogroup B (strain ATCC BAA-335 / MC58), this protein is Surface lipoprotein assembly modifier 1.